Consider the following 358-residue polypeptide: Phosphoserine aminotransferase (358 aa).

Arg41 contributes to the L-glutamate binding site. Pyridoxal 5'-phosphate is bound by residues 75–76, Trp100, Thr148, Asp167, and Gln190; that span reads AS. An N6-(pyridoxal phosphate)lysine modification is found at Lys191. 233–234 provides a ligand contact to pyridoxal 5'-phosphate; it reads NT.

This sequence belongs to the class-V pyridoxal-phosphate-dependent aminotransferase family. SerC subfamily. As to quaternary structure, homodimer. The cofactor is pyridoxal 5'-phosphate.

It localises to the cytoplasm. The enzyme catalyses O-phospho-L-serine + 2-oxoglutarate = 3-phosphooxypyruvate + L-glutamate. It catalyses the reaction 4-(phosphooxy)-L-threonine + 2-oxoglutarate = (R)-3-hydroxy-2-oxo-4-phosphooxybutanoate + L-glutamate. The protein operates within amino-acid biosynthesis; L-serine biosynthesis; L-serine from 3-phospho-D-glycerate: step 2/3. It functions in the pathway cofactor biosynthesis; pyridoxine 5'-phosphate biosynthesis; pyridoxine 5'-phosphate from D-erythrose 4-phosphate: step 3/5. Catalyzes the reversible conversion of 3-phosphohydroxypyruvate to phosphoserine and of 3-hydroxy-2-oxo-4-phosphonooxybutanoate to phosphohydroxythreonine. The chain is Phosphoserine aminotransferase from Campylobacter jejuni subsp. jejuni serotype O:23/36 (strain 81-176).